A 99-amino-acid polypeptide reads, in one-letter code: Small integral membrane protein 14 (99 aa).

Residues 1-49 (MAEGGFDPCECVCSHEHAMRRLINLLRQSQSYCTDTECLRELPGPSSDS) are Lumenal-facing. The chain crosses the membrane as a helical span at residues 50–70 (GISITVILMAWMVIAMLLFLL). Topologically, residues 71–99 (RPPNLRGSSLPGKPSSPHSGQDPPAPPVD) are cytoplasmic. The interval 77–99 (GSSLPGKPSSPHSGQDPPAPPVD) is disordered.

Ubiquitously expressed.

It localises to the endoplasmic reticulum membrane. This chain is Small integral membrane protein 14 (Smim14), found in Mus musculus (Mouse).